Reading from the N-terminus, the 111-residue chain is V-type proton ATPase subunit G 2 (111 aa).

The protein belongs to the V-ATPase G subunit family. As to quaternary structure, V-ATPase is a heteromultimeric enzyme composed of a peripheral catalytic V1 complex (components A to H) attached to an integral membrane V0 proton pore complex (components: a, c, c', c'' and d).

Its function is as follows. Catalytic subunit of the peripheral V1 complex of vacuolar ATPase (V-ATPase). V-ATPase is responsible for acidifying a variety of intracellular compartments in eukaryotic cells. The chain is V-type proton ATPase subunit G 2 (VATG2) from Nicotiana tabacum (Common tobacco).